A 282-amino-acid polypeptide reads, in one-letter code: Transmembrane protein 41B (282 aa).

Residues 1 to 36 (MAKKRAGNRETESSPLVEQEPRPSKETPVPKGAQSP) form a disordered region. 6 consecutive transmembrane segments (helical) span residues 43-63 (MSIL…YLVF), 102-122 (TQVL…AIPG), 138-160 (LALF…LSYL), 188-208 (LINY…FINI), 216-236 (PLGV…FVAI), and 251-271 (AVSW…ILPV). The VTT domain; required for its function in autophagy stretch occupies residues 131–242 (GYLYPFPLAL…FVAINAGTTL (112 aa)).

This sequence belongs to the TMEM41 family.

The protein localises to the endoplasmic reticulum membrane. It localises to the endomembrane system. The catalysed reaction is a 1,2-diacyl-sn-glycero-3-phospho-L-serine(in) = a 1,2-diacyl-sn-glycero-3-phospho-L-serine(out). It catalyses the reaction cholesterol(in) = cholesterol(out). The enzyme catalyses a 1,2-diacyl-sn-glycero-3-phosphocholine(in) = a 1,2-diacyl-sn-glycero-3-phosphocholine(out). It carries out the reaction a 1,2-diacyl-sn-glycero-3-phosphoethanolamine(in) = a 1,2-diacyl-sn-glycero-3-phosphoethanolamine(out). Phospholipid scramblase involved in lipid homeostasis and membrane dynamics processes. Has phospholipid scramblase activity toward cholesterol and phosphatidylserine, as well as phosphatidylethanolamine and phosphatidylcholine. Required for autophagosome formation: participates in early stages of autophagosome biogenesis at the endoplasmic reticulum (ER) membrane by reequilibrating the leaflets of the ER as lipids are extracted by atg2 (atg2a or atg2b) to mediate autophagosome assembly. In addition to autophagy, involved in other processes in which phospholipid scramblase activity is required. Required for normal motor neuron development. The sequence is that of Transmembrane protein 41B from Danio rerio (Zebrafish).